Here is a 267-residue protein sequence, read N- to C-terminus: Zerumbone synthase (267 aa).

Position 9 to 33 (9 to 33 (LVTGGASGIGESIARLFIEHGAKIC)) interacts with NAD(+). Ser142 contributes to the substrate binding site. Tyr155 (proton acceptor) is an active-site residue.

The protein belongs to the short-chain dehydrogenases/reductases (SDR) family. Expressed in leaves, stems and rhizomes.

The enzyme catalyses 10-hydroxy-alpha-humulene + NAD(+) = zerumbone + NADH + H(+). Its function is as follows. Catalyzes 8-hydroxy-alpha-humulene into zerumbone in presence of NAD. Also converts borneol to camphor in vitro. Zerumbone is a highly promising multi-anticancer agent. This Zingiber zerumbet (Shampoo ginger) protein is Zerumbone synthase (ZSD1).